Here is a 186-residue protein sequence, read N- to C-terminus: Probable peptidyl-tRNA hydrolase 2 (186 aa).

It belongs to the PTH2 family.

It carries out the reaction an N-acyl-L-alpha-aminoacyl-tRNA + H2O = an N-acyl-L-amino acid + a tRNA + H(+). Its function is as follows. The natural substrate for this enzyme may be peptidyl-tRNAs which drop off the ribosome during protein synthesis. The protein is Probable peptidyl-tRNA hydrolase 2 of Drosophila melanogaster (Fruit fly).